The chain runs to 448 residues: UDP-N-acetylglucosamine--dolichyl-phosphate N-acetylglucosaminephosphotransferase (448 aa).

The chain crosses the membrane as a helical span at residues 24–44 (ALVAAVGFGIAGYLATDMLIP). Residues 58–60 (KDL) and E70 each bind UDP-N-acetyl-alpha-D-glucosamine. The next 2 helical transmembrane spans lie at 72–92 (IGAI…PFIF) and 129–149 (YLSA…DDLF). K156 lines the dolichyl phosphate pocket. 2 helical membrane-spanning segments follow: residues 157-177 (FFLP…DFGV) and 202-222 (YVYM…LAGV). 210–218 (IFCPNSINI) contributes to the dolichyl phosphate binding site. A Mg(2+)-binding site is contributed by N217. N223 contacts UDP-N-acetyl-alpha-D-glucosamine. A run of 4 helical transmembrane segments spans residues 231–251 (IVLA…GPLA), 256–276 (HRFS…LWKW), 283–303 (VFVG…VGIL), and 309–329 (TMLL…PQLF). Residue D287 coordinates Mg(2+). 336–338 (RHR) is a UDP-N-acetyl-alpha-D-glucosamine binding site. Transmembrane regions (helical) follow at residues 387–407 (EIIS…FGPM) and 419–439 (LQFC…AIIF).

The protein belongs to the glycosyltransferase 4 family. Mg(2+) serves as cofactor.

It localises to the endoplasmic reticulum membrane. The enzyme catalyses a di-trans,poly-cis-dolichyl phosphate + UDP-N-acetyl-alpha-D-glucosamine = an N-acetyl-alpha-D-glucosaminyl-diphospho-di-trans,poly-cis-dolichol + UMP. Its pathway is protein modification; protein glycosylation. With respect to regulation, inhibited by natural nucleoside antibiotic tunicamycin, which acts as a structural analog and competitor of UDP-GlcNAc. Functionally, UDP-N-acetylglucosamine--dolichyl-phosphate N-acetylglucosaminephosphotransferase that operates in the biosynthetic pathway of dolichol-linked oligosaccharides, the glycan precursors employed in protein asparagine (N)-glycosylation. The assembly of dolichol-linked oligosaccharides begins on the cytosolic side of the endoplasmic reticulum membrane and finishes in its lumen. The sequential addition of sugars to dolichol pyrophosphate produces dolichol-linked oligosaccharides containing fourteen sugars, including two GlcNAcs, nine mannoses and three glucoses. Once assembled, the oligosaccharide is transferred from the lipid to nascent proteins by oligosaccharyltransferases. Catalyzes the initial step of dolichol-linked oligosaccharide biosynthesis, transfering GlcNAc-1-P from cytosolic UDP-GlcNAc onto the carrier lipid dolichyl phosphate (P-dolichol), yielding GlcNAc-P-P-dolichol embedded in the cytoplasmic leaflet of the endoplasmic reticulum membrane. The chain is UDP-N-acetylglucosamine--dolichyl-phosphate N-acetylglucosaminephosphotransferase (ALG7) from Saccharomyces cerevisiae (strain ATCC 204508 / S288c) (Baker's yeast).